The following is a 784-amino-acid chain: Cadherin-5 (784 aa).

A signal peptide spans 1–24 (MQRLTELATALGAFLGLLAVAAMA). Positions 25-45 (GPNFPQIDTPNMLPAHHRQKR) are excised as a propeptide. Cadherin domains are found at residues 46–149 (DWIW…WPVF), 150–256 (SHQV…FPVF), 257–371 (TQST…PPVF), 372–476 (QRHF…DNPP), and 477–593 (EFAQ…MAAQ). Residues 46–599 (DWIWNQMHID…MAAQAGVSIQ (554 aa)) lie on the Extracellular side of the membrane. Ca(2+) is bound by residues Glu-56 and Glu-57. A glycan (N-linked (GlcNAc...) asparagine) is linked at Asn-59. 7 residues coordinate Ca(2+): Asp-107, Glu-109, Asp-141, Ile-142, Asn-143, Asp-144, and Asn-145. A glycan (N-linked (GlcNAc...) asparagine) is linked at Asn-155. Ca(2+) contacts are provided by Asp-175, Asp-177, His-184, and Asp-229. Residues Asn-441, Asn-523, and Asn-535 are each glycosylated (N-linked (GlcNAc...) asparagine). A helical membrane pass occupies residues 600-620 (ALVAIFLCILTITVITLLIIL). Residues 621-660 (RRRIRKQAHAHSKSALEIHEQLVTYDEEGGGEMDTTSYDV) are required for interaction with PALS1. Residues 621 to 784 (RRRIRKQAHA…GSDPQEELII (164 aa)) are Cytoplasmic-facing.

In terms of assembly, part of a complex composed of AMOTL2, MAGI1 and CDH5, within the complex AMOTL2 acts as a scaffold protein for the interaction of MAGI1 with CDH5. The complex is required for coupling actin fibers to cell junctions in endothelial cells. Within the complex AMOTL2 (via its N-terminus) interacts with CDH5. Interacts (via cadherin 5 domain) with PTPRB. Interacts with TRPC4. Interacts with KRIT1. Interacts with PARD3. Interacts with RTN4 (isoform B). Interacts with PALS1; the interaction promotes PALS1 localization to cell junctions and is required for CDH5-mediated vascular lumen formation and endothelial cell polarity. Interacts with CTNND1/p120-catenin; the interaction controls CADH5 endocytosis. Phosphorylated on tyrosine residues by KDR/VEGFR-2. Dephosphorylated by PTPRB. Post-translationally, O-glycosylated. In terms of tissue distribution, expressed in postnatal endothelial cells of the retinal vascular plexus (at protein level).

It localises to the cell junction. The protein resides in the adherens junction. The protein localises to the cell membrane. It is found in the cytoplasm. Functionally, cadherins are calcium-dependent cell adhesion proteins. They preferentially interact with themselves in a homophilic manner in connecting cells; cadherins may thus contribute to the sorting of heterogeneous cell types. This cadherin may play an important role in endothelial cell biology through control of the cohesion and organization of the intercellular junctions. It associates with alpha-catenin forming a link to the cytoskeleton. Plays a role in coupling actin fibers to cell junctions in endothelial cells, via acting as a cell junctional complex anchor for AMOTL2 and MAGI1. Acts in concert with KRIT1 and PALS1 to establish and maintain correct endothelial cell polarity and vascular lumen. These effects are mediated by recruitment and activation of the Par polarity complex and RAP1B. Required for activation of PRKCZ and for localization of phosphorylated PRKCZ, PARD3, TIAM1 and RAP1B to the cell junction. Associates with CTNND1/p120-catenin to control CADH5 endocytosis. This Mus musculus (Mouse) protein is Cadherin-5.